Here is a 183-residue protein sequence, read N- to C-terminus: Putative manganese efflux pump MntP 1 (183 aa).

6 helical membrane passes run 6-26 (LFLL…CIGI), 36-56 (MIFV…GGYI), 64-84 (IVPI…ILMI), 100-120 (IMYL…GFTT), 130-150 (LFMS…LGII), and 158-178 (ISII…LFGL).

This sequence belongs to the MntP (TC 9.B.29) family.

It is found in the cell membrane. Its function is as follows. Probably functions as a manganese efflux pump. The protein is Putative manganese efflux pump MntP 1 of Clostridium botulinum (strain Hall / ATCC 3502 / NCTC 13319 / Type A).